A 322-amino-acid chain; its full sequence is MQYVGIQTQQSRNNLRSGILLILFPCLVAVLTYLFCYLLITFTVEDDYGQYNTLAMTNQMFINLIPYIIGGVLVWFIIAYFTNSSIIKAATGARPLERKENKRIYNLVENLCMSQGMKMPKINIIDDDSLNAYASGINEQTYTITLSKGIIEKLNDEELEGVIAHELTHIRNHDVRLLIISIVFVGIFSMLAQIALRSVYYSSWTRSRNDKNNGAILILVLAMIVAAIGYFFATLMRFAISRKREYMADAGAAEMTKNPLALASALRKISADPDIEAVEREDVAQLFIQHPGKQAKSALSGLSGLFATHPPIEKRIAILEQF.

The next 2 membrane-spanning stretches (helical) occupy residues 19–39 (ILLILFPCLVAVLTYLFCYLL) and 61–81 (FINLIPYIIGGVLVWFIIAYF). His165 contributes to the Zn(2+) binding site. The active site involves Glu166. His169 contacts Zn(2+). 2 helical membrane-spanning segments follow: residues 175 to 195 (VRLLIISIVFVGIFSMLAQIA) and 216 to 236 (ILILVLAMIVAAIGYFFATLM). Residue Glu245 coordinates Zn(2+).

It belongs to the peptidase M48B family. It depends on Zn(2+) as a cofactor.

It localises to the cell inner membrane. This chain is Protease HtpX homolog, found in Bacteroides fragilis (strain YCH46).